Consider the following 98-residue polypeptide: Citrate lyase acyl carrier protein (98 aa).

At serine 14 the chain carries O-(phosphoribosyl dephospho-coenzyme A)serine.

It belongs to the CitD family. As to quaternary structure, oligomer with a subunit composition of (alpha,beta,gamma)6.

Its subcellular location is the cytoplasm. Its function is as follows. Covalent carrier of the coenzyme of citrate lyase. The sequence is that of Citrate lyase acyl carrier protein from Shigella flexneri.